The chain runs to 428 residues: 3-phosphoshikimate 1-carboxyvinyltransferase (428 aa).

3-phosphoshikimate-binding residues include Lys23, Ser24, and Arg28. Lys23 serves as a coordination point for phosphoenolpyruvate. Residues Gly97 and Arg125 each contribute to the phosphoenolpyruvate site. 3-phosphoshikimate is bound by residues Ser170, Ser171, Gln172, Ser198, Asp314, Asn337, and Lys341. Gln172 is a phosphoenolpyruvate binding site. Asp314 acts as the Proton acceptor in catalysis. Positions 345, 387, and 412 each coordinate phosphoenolpyruvate.

It belongs to the EPSP synthase family. In terms of assembly, monomer.

The protein resides in the cytoplasm. It carries out the reaction 3-phosphoshikimate + phosphoenolpyruvate = 5-O-(1-carboxyvinyl)-3-phosphoshikimate + phosphate. Its pathway is metabolic intermediate biosynthesis; chorismate biosynthesis; chorismate from D-erythrose 4-phosphate and phosphoenolpyruvate: step 6/7. In terms of biological role, catalyzes the transfer of the enolpyruvyl moiety of phosphoenolpyruvate (PEP) to the 5-hydroxyl of shikimate-3-phosphate (S3P) to produce enolpyruvyl shikimate-3-phosphate and inorganic phosphate. The chain is 3-phosphoshikimate 1-carboxyvinyltransferase from Erwinia tasmaniensis (strain DSM 17950 / CFBP 7177 / CIP 109463 / NCPPB 4357 / Et1/99).